Reading from the N-terminus, the 467-residue chain is Dimethylamine methyltransferase MtbB3 (467 aa).

Position 356 (Pyl-356) is a non-standard amino acid, pyrrolysine.

This sequence belongs to the dimethylamine methyltransferase family.

It carries out the reaction Co(I)-[dimethylamine-specific corrinoid protein] + dimethylamine + H(+) = methyl-Co(III)-[dimethylamine-specific corrinoid protein] + methylamine. It functions in the pathway one-carbon metabolism; methanogenesis from dimethylamine. Catalyzes the transfer of a methyl group from dimethylamine to the corrinoid cofactor of MtbC. The chain is Dimethylamine methyltransferase MtbB3 (mtbB3) from Methanosarcina acetivorans (strain ATCC 35395 / DSM 2834 / JCM 12185 / C2A).